The primary structure comprises 155 residues: Protein-export protein SecB (155 aa).

This sequence belongs to the SecB family. Homotetramer, a dimer of dimers. One homotetramer interacts with 1 SecA dimer.

It is found in the cytoplasm. In terms of biological role, one of the proteins required for the normal export of preproteins out of the cell cytoplasm. It is a molecular chaperone that binds to a subset of precursor proteins, maintaining them in a translocation-competent state. It also specifically binds to its receptor SecA. This chain is Protein-export protein SecB, found in Escherichia coli O127:H6 (strain E2348/69 / EPEC).